A 637-amino-acid polypeptide reads, in one-letter code: DNA primase (637 aa).

A CHC2-type zinc finger spans residues 39-63 (CPFHGEKTPSFNVNAEKGFYHCFGC). The Toprim domain maps to 257–338 (HEVYLMEGFM…QIVKVPEGLD (82 aa)). Mg(2+) contacts are provided by Glu-263, Asp-307, and Asp-309.

It belongs to the DnaG primase family. Monomer. Interacts with DnaB. It depends on Zn(2+) as a cofactor. Requires Mg(2+) as cofactor.

It carries out the reaction ssDNA + n NTP = ssDNA/pppN(pN)n-1 hybrid + (n-1) diphosphate.. In terms of biological role, RNA polymerase that catalyzes the synthesis of short RNA molecules used as primers for DNA polymerase during DNA replication. This is DNA primase from Lactococcus lactis subsp. lactis (strain IL1403) (Streptococcus lactis).